The primary structure comprises 136 residues: Holo-[acyl-carrier-protein] synthase (136 aa).

Mg(2+) contacts are provided by aspartate 7 and glutamate 53.

It belongs to the P-Pant transferase superfamily. AcpS family. Mg(2+) serves as cofactor.

The protein localises to the cytoplasm. The enzyme catalyses apo-[ACP] + CoA = holo-[ACP] + adenosine 3',5'-bisphosphate + H(+). Its function is as follows. Transfers the 4'-phosphopantetheine moiety from coenzyme A to a Ser of acyl-carrier-protein. The protein is Holo-[acyl-carrier-protein] synthase of Roseiflexus castenholzii (strain DSM 13941 / HLO8).